The chain runs to 358 residues: Putative spore germination protein YfkT (358 aa).

10 consecutive transmembrane segments (helical) span residues 10 to 30, 36 to 56, 81 to 101, 107 to 127, 143 to 163, 179 to 199, 210 to 230, 262 to 282, 297 to 317, and 326 to 346; these read LFFG…ILMI, NAWH…WLMH, IIIL…IRFF, ILFL…FVAI, IFLF…ATQI, LQSG…PLLF, IFAI…SISV, IIAA…LYIV, AMYT…FLNT, and IKPI…YLII.

The protein belongs to the amino acid-polyamine-organocation (APC) superfamily. Spore germination protein (SGP) (TC 2.A.3.9) family.

Its subcellular location is the cell membrane. In terms of biological role, may be involved in spore germination. This chain is Putative spore germination protein YfkT (yfkT), found in Bacillus subtilis (strain 168).